Consider the following 331-residue polypeptide: Adenosine deaminase (331 aa).

Zn(2+) contacts are provided by H12 and H14. The substrate site is built by H14, D16, and G170. H197 contacts Zn(2+). Residue E200 is the Proton donor of the active site. D278 contacts Zn(2+). Substrate is bound at residue D279.

It belongs to the metallo-dependent hydrolases superfamily. Adenosine and AMP deaminases family. Adenosine deaminase subfamily. Zn(2+) is required as a cofactor.

The catalysed reaction is adenosine + H2O + H(+) = inosine + NH4(+). It catalyses the reaction 2'-deoxyadenosine + H2O + H(+) = 2'-deoxyinosine + NH4(+). Catalyzes the hydrolytic deamination of adenosine and 2-deoxyadenosine. This Shewanella sp. (strain W3-18-1) protein is Adenosine deaminase.